The primary structure comprises 337 residues: MAVKVGINGFGRIGRIVLRNALQLGNIEVVAINDPFIALDYMVYMFKYDTVHGRYKGTVEVKDGKLVVDGHAITVFAEKNPADIKWGSAGADYIVESTGVFTTVEKASLHLQGGAKKVVISAPSADAPMFVVGVNLDKYDSKYQVISNASCTTNCLAPLAKVIHDKYGIAEGLMTTVHATTATQKTVDGPSHKDWRGGRSVNNNIIPSSTGAAKAVGKVIPSLNGRLTGLAFRVPTLDVSVVDLVVRLEKEASYDEIVATVKEASEGPLKGILGFTDESVVSTDFTGANESSIFDSKAGIAISKSFVKLIAWYDNEWGYSRRVCDLLVYAAKQDGAL.

Residues 12-13 (RI), aspartate 34, and lysine 79 contribute to the NAD(+) site. Residues 150–152 (SCT), threonine 181, 210–211 (TG), and arginine 233 each bind D-glyceraldehyde 3-phosphate. Cysteine 151 serves as the catalytic Nucleophile. Asparagine 315 is a binding site for NAD(+).

It belongs to the glyceraldehyde-3-phosphate dehydrogenase family. As to quaternary structure, homotetramer.

The protein localises to the cytoplasm. The enzyme catalyses D-glyceraldehyde 3-phosphate + phosphate + NAD(+) = (2R)-3-phospho-glyceroyl phosphate + NADH + H(+). Its pathway is carbohydrate degradation; glycolysis; pyruvate from D-glyceraldehyde 3-phosphate: step 1/5. This is Glyceraldehyde-3-phosphate dehydrogenase (GPD) from Schizophyllum commune (Split gill fungus).